The primary structure comprises 94 residues: Large ribosomal subunit protein bL28 (94 aa).

This sequence belongs to the bacterial ribosomal protein bL28 family.

In Novosphingobium aromaticivorans (strain ATCC 700278 / DSM 12444 / CCUG 56034 / CIP 105152 / NBRC 16084 / F199), this protein is Large ribosomal subunit protein bL28.